Consider the following 157-residue polypeptide: MAPARAGCCPLLLLLLLLLGLWVAEVLVSAKPKDMTSSQWFKTQHVQPGPQACNSAISNINKYTERCKDLNTFLHEPFSSVAITCQTPNIACKNSCKNCHQSHGPMSLTMGELTSGKYPNCRYKEKHLNTPYMVACDPPQQGDPGYPLVPVHLDKVV.

Positions 1 to 30 (MAPARAGCCPLLLLLLLLLGLWVAEVLVSA) are cleaved as a signal peptide. Catalysis depends on His45, which acts as the Proton acceptor. 4 disulfide bridges follow: Cys53/Cys96, Cys67/Cys121, Cys85/Cys136, and Cys92/Cys99. Substrate contacts are provided by residues 68-72 (KDLNT) and Lys93. The active-site Proton donor is the His152.

This sequence belongs to the pancreatic ribonuclease family.

It localises to the secreted. In terms of biological role, has a low ribonuclease activity. The protein is Ribonuclease 8 (RNASE8) of Pan troglodytes (Chimpanzee).